We begin with the raw amino-acid sequence, 382 residues long: Dual-specificity RNA methyltransferase RlmN (382 aa).

Glu-96 (proton acceptor) is an active-site residue. The Radical SAM core domain occupies 102-342 (QGGRGTLCVS…VRTTRGEDID (241 aa)). A disulfide bridge links Cys-109 with Cys-345. 3 residues coordinate [4Fe-4S] cluster: Cys-116, Cys-120, and Cys-123. Residues 170-171 (GE), Ser-202, 224-226 (SLH), and Asn-302 contribute to the S-adenosyl-L-methionine site. Cys-345 functions as the S-methylcysteine intermediate in the catalytic mechanism.

The protein belongs to the radical SAM superfamily. RlmN family. The cofactor is [4Fe-4S] cluster.

It is found in the cytoplasm. The enzyme catalyses adenosine(2503) in 23S rRNA + 2 reduced [2Fe-2S]-[ferredoxin] + 2 S-adenosyl-L-methionine = 2-methyladenosine(2503) in 23S rRNA + 5'-deoxyadenosine + L-methionine + 2 oxidized [2Fe-2S]-[ferredoxin] + S-adenosyl-L-homocysteine. It catalyses the reaction adenosine(37) in tRNA + 2 reduced [2Fe-2S]-[ferredoxin] + 2 S-adenosyl-L-methionine = 2-methyladenosine(37) in tRNA + 5'-deoxyadenosine + L-methionine + 2 oxidized [2Fe-2S]-[ferredoxin] + S-adenosyl-L-homocysteine. Its function is as follows. Specifically methylates position 2 of adenine 2503 in 23S rRNA and position 2 of adenine 37 in tRNAs. m2A2503 modification seems to play a crucial role in the proofreading step occurring at the peptidyl transferase center and thus would serve to optimize ribosomal fidelity. In Stutzerimonas stutzeri (strain A1501) (Pseudomonas stutzeri), this protein is Dual-specificity RNA methyltransferase RlmN.